We begin with the raw amino-acid sequence, 417 residues long: Tyrosine--tRNA ligase (417 aa).

Residue Y39 participates in L-tyrosine binding. Positions 44–53 match the 'HIGH' region motif; it reads PTASSLHVGH. 2 residues coordinate L-tyrosine: Y176 and Q180. The 'KMSKS' region motif lies at 236-240; sequence KMGKS. Residue K239 participates in ATP binding. Residues 350-416 form the S4 RNA-binding domain; the sequence is VGVLSLIVRA…GKKKHVLVRP (67 aa).

It belongs to the class-I aminoacyl-tRNA synthetase family. TyrS type 1 subfamily. Homodimer.

The protein localises to the cytoplasm. The enzyme catalyses tRNA(Tyr) + L-tyrosine + ATP = L-tyrosyl-tRNA(Tyr) + AMP + diphosphate + H(+). Functionally, catalyzes the attachment of tyrosine to tRNA(Tyr) in a two-step reaction: tyrosine is first activated by ATP to form Tyr-AMP and then transferred to the acceptor end of tRNA(Tyr). The sequence is that of Tyrosine--tRNA ligase from Agrobacterium fabrum (strain C58 / ATCC 33970) (Agrobacterium tumefaciens (strain C58)).